A 283-amino-acid polypeptide reads, in one-letter code: 4-diphosphocytidyl-2-C-methyl-D-erythritol kinase (283 aa).

Residue K10 is part of the active site. P95–S105 contributes to the ATP binding site. Residue D137 is part of the active site.

The protein belongs to the GHMP kinase family. IspE subfamily.

It catalyses the reaction 4-CDP-2-C-methyl-D-erythritol + ATP = 4-CDP-2-C-methyl-D-erythritol 2-phosphate + ADP + H(+). It functions in the pathway isoprenoid biosynthesis; isopentenyl diphosphate biosynthesis via DXP pathway; isopentenyl diphosphate from 1-deoxy-D-xylulose 5-phosphate: step 3/6. Functionally, catalyzes the phosphorylation of the position 2 hydroxy group of 4-diphosphocytidyl-2C-methyl-D-erythritol. The chain is 4-diphosphocytidyl-2-C-methyl-D-erythritol kinase from Pediococcus pentosaceus (strain ATCC 25745 / CCUG 21536 / LMG 10740 / 183-1w).